A 338-amino-acid polypeptide reads, in one-letter code: Biotin synthase (338 aa).

The Radical SAM core domain maps to 59–284 (EEVEIEGIVS…RTTLRFAGGR (226 aa)). [4Fe-4S] cluster is bound by residues Cys-74, Cys-78, and Cys-81. [2Fe-2S] cluster is bound by residues Cys-117, Cys-209, and Arg-279.

The protein belongs to the radical SAM superfamily. Biotin synthase family. In terms of assembly, homodimer. [4Fe-4S] cluster serves as cofactor. [2Fe-2S] cluster is required as a cofactor.

It catalyses the reaction (4R,5S)-dethiobiotin + (sulfur carrier)-SH + 2 reduced [2Fe-2S]-[ferredoxin] + 2 S-adenosyl-L-methionine = (sulfur carrier)-H + biotin + 2 5'-deoxyadenosine + 2 L-methionine + 2 oxidized [2Fe-2S]-[ferredoxin]. Its pathway is cofactor biosynthesis; biotin biosynthesis; biotin from 7,8-diaminononanoate: step 2/2. Its function is as follows. Catalyzes the conversion of dethiobiotin (DTB) to biotin by the insertion of a sulfur atom into dethiobiotin via a radical-based mechanism. This chain is Biotin synthase, found in Corynebacterium urealyticum (strain ATCC 43042 / DSM 7109).